The primary structure comprises 107 residues: MNVIEKIERQIKDNIILIYMKGTPQSPSCGFSAQAVQALSICGEKFAYVDILENLDIRKELPRYANWPTFPQLWIKGELIGGCSIILEMLENGELKKIISNAVLNSK.

The Glutaredoxin domain occupies 4 to 106 (IEKIERQIKD…KIISNAVLNS (103 aa)). Glutathione is bound at residue lysine 21. Cysteine 29 is a binding site for [2Fe-2S] cluster. Glutathione contacts are provided by residues arginine 58, phenylalanine 70, and 83-84 (CS).

The protein belongs to the glutaredoxin family. Monothiol subfamily. In terms of assembly, homodimer.

It is found in the cytoplasm. Functionally, monothiol glutaredoxin involved in the biogenesis of iron-sulfur clusters. This Buchnera aphidicola subsp. Schizaphis graminum (strain Sg) protein is Glutaredoxin 4 (grxD).